A 459-amino-acid chain; its full sequence is Glutamate--tRNA ligase 2 (459 aa).

A 'HIGH' region motif is present at residues 8–18 (PSPTGYLHIGG). Positions 237 to 241 (KLSKR) match the 'KMSKS' region motif. Lys-240 serves as a coordination point for ATP.

The protein belongs to the class-I aminoacyl-tRNA synthetase family. Glutamate--tRNA ligase type 1 subfamily. As to quaternary structure, monomer.

The protein localises to the cytoplasm. It catalyses the reaction tRNA(Glu) + L-glutamate + ATP = L-glutamyl-tRNA(Glu) + AMP + diphosphate. In terms of biological role, catalyzes the attachment of glutamate to tRNA(Glu) in a two-step reaction: glutamate is first activated by ATP to form Glu-AMP and then transferred to the acceptor end of tRNA(Glu). This chain is Glutamate--tRNA ligase 2, found in Campylobacter curvus (strain 525.92).